The chain runs to 86 residues: Probable weak neurotoxin NNAM2I (86 aa).

Residues 1–21 form the signal peptide; the sequence is MKTLPLTLVVVTIVCLDLGYT. Disulfide bonds link Cys24/Cys45, Cys27/Cys32, Cys38/Cys63, Cys67/Cys78, and Cys79/Cys84.

It belongs to the three-finger toxin family. Ancestral subfamily. Orphan group II sub-subfamily. As to expression, expressed by the venom gland.

It localises to the secreted. Its function is as follows. Binds with low affinity to muscular (alpha-1-beta-1-delta-epsilon/CHRNA1-CHRNB1-CHRND-CHRNE) and very low affinity to neuronal (alpha-7/CHRNA7) nicotinic acetylcholine receptor (nAChR). The chain is Probable weak neurotoxin NNAM2I from Naja atra (Chinese cobra).